The chain runs to 210 residues: Probable GTP-binding protein EngB (210 aa).

The EngB-type G domain occupies 25-199; sequence CGIEVAFAGR…RQKLDSWFSE (175 aa). Residues 33-40, 60-64, 78-81, 145-148, and 178-180 each bind GTP; these read GRSNAGKS, GRTQL, DLPG, TKAD, and FSS. The Mg(2+) site is built by S40 and T62.

It belongs to the TRAFAC class TrmE-Era-EngA-EngB-Septin-like GTPase superfamily. EngB GTPase family. It depends on Mg(2+) as a cofactor.

Necessary for normal cell division and for the maintenance of normal septation. The protein is Probable GTP-binding protein EngB of Salmonella dublin (strain CT_02021853).